The following is a 493-amino-acid chain: Probable malate:quinone oxidoreductase (493 aa).

The protein belongs to the MQO family. Requires FAD as cofactor.

It carries out the reaction (S)-malate + a quinone = a quinol + oxaloacetate. It participates in carbohydrate metabolism; tricarboxylic acid cycle; oxaloacetate from (S)-malate (quinone route): step 1/1. The sequence is that of Probable malate:quinone oxidoreductase from Mycobacterium marinum (strain ATCC BAA-535 / M).